A 140-amino-acid polypeptide reads, in one-letter code: Sex-regulated protein janus-B (140 aa).

Residue R42 participates in substrate binding. The active-site Proton acceptor is H69. Residue 110–112 (SRT) participates in substrate binding.

This sequence belongs to the janus family.

JanA and janB regulate somatic sex differentiation. In Drosophila orena (Fruit fly), this protein is Sex-regulated protein janus-B (janB).